Reading from the N-terminus, the 503-residue chain is Beta-amylase Tri a 17 (503 aa).

Substrate is bound by residues Asp51, His91, and Asp99. Catalysis depends on Glu184, which acts as the Proton donor. 3 residues coordinate substrate: Lys293, His298, and Thr340. The active-site Proton acceptor is Glu378. Substrate is bound by residues 379 to 380 (NA) and Arg418.

The protein belongs to the glycosyl hydrolase 14 family.

It carries out the reaction Hydrolysis of (1-&gt;4)-alpha-D-glucosidic linkages in polysaccharides so as to remove successive maltose units from the non-reducing ends of the chains.. The polypeptide is Beta-amylase Tri a 17 (BMY1) (Triticum aestivum (Wheat)).